The primary structure comprises 335 residues: Biotin synthase (335 aa).

In terms of domain architecture, Radical SAM core spans 46–274; that stretch reads YNIQLASLFS…KSKIRLSAGR (229 aa). 3 residues coordinate [4Fe-4S] cluster: cysteine 61, cysteine 65, and cysteine 68. The [2Fe-2S] cluster site is built by cysteine 105, cysteine 137, cysteine 197, and arginine 269.

This sequence belongs to the radical SAM superfamily. Biotin synthase family. In terms of assembly, homodimer. The cofactor is [4Fe-4S] cluster. It depends on [2Fe-2S] cluster as a cofactor.

The catalysed reaction is (4R,5S)-dethiobiotin + (sulfur carrier)-SH + 2 reduced [2Fe-2S]-[ferredoxin] + 2 S-adenosyl-L-methionine = (sulfur carrier)-H + biotin + 2 5'-deoxyadenosine + 2 L-methionine + 2 oxidized [2Fe-2S]-[ferredoxin]. Its pathway is cofactor biosynthesis; biotin biosynthesis; biotin from 7,8-diaminononanoate: step 2/2. Catalyzes the conversion of dethiobiotin (DTB) to biotin by the insertion of a sulfur atom into dethiobiotin via a radical-based mechanism. The chain is Biotin synthase from Prochlorococcus marinus (strain AS9601).